The following is a 59-amino-acid chain: Large ribosomal subunit protein bL32 (59 aa).

Residues 1–59 (MAVQQNKKSPSKRGMHRSHDALTAPALFVDSTTGEVHRPHHISPNGMYRGRKVVKAKGE) are disordered. A compositionally biased stretch (basic residues) spans 49–59 (RGRKVVKAKGE).

The protein belongs to the bacterial ribosomal protein bL32 family.

This is Large ribosomal subunit protein bL32 from Neisseria gonorrhoeae (strain ATCC 700825 / FA 1090).